Consider the following 380-residue polypeptide: MGIQGLAKLIADVAPSAIRENDIKSYFGRKVAIDASMSIYQFLIAVRQGGDVLQNEEGETTSHLMGMFYRTIRMMENGIKPVYVFDGKPPQLKSGELAKRSERRAEAEKQLQQAQAAGAETEVEKFTKRLVKVTKQHNDECKHLLSLMGIPYLDAPSEAEASCAALVKAGKVYAAATEDMDCLTFGSPVLMRHLTASEAKKLPIQEFHLSRILQELGLNQEQFVDLCILLGSDYCESIRGIGPKRAVDLIQKHKSIEEIVRRLDPNKYPVPENWLHKEAQQLFLEPEVLDPESVELKWSEPNEEELVRFMCGEKQFSEERIRSGVRRLSKSRQGSTQGRLDDFFKVTGSLSSAKRKEPEPKGAAKKKQRLGPAGKFKRGK.

Residues 1 to 104 (MGIQGLAKLI…GELAKRSERR (104 aa)) are N-domain. The residue at position 19 (Arg19) is a Symmetric dimethylarginine; by PRMT5. Asp34 serves as a coordination point for Mg(2+). DNA-binding residues include Arg47 and Arg70. At Lys80 the chain carries N6-acetyllysine. Asp86 is a Mg(2+) binding site. Arg100 and Arg104 each carry symmetric dimethylarginine; by PRMT5. The tract at residues 122–253 (EVEKFTKRLV…KRAVDLIQKH (132 aa)) is I-domain. Residues Glu158, Glu160, Asp179, and Asp181 each coordinate Mg(2+). Residue Glu158 coordinates DNA. Ser187 bears the Phosphoserine; by CDK2 mark. Residue Arg192 is modified to Symmetric dimethylarginine; by PRMT5. The residue at position 197 (Ser197) is a Phosphoserine. 2 residues coordinate DNA: Gly231 and Asp233. Residue Asp233 coordinates Mg(2+). Phosphoserine is present on residues Ser255, Ser293, and Ser335. Thr336 bears the Phosphothreonine mark. Positions 336–344 (TQGRLDDFF) are interaction with PCNA. A disordered region spans residues 349-380 (SLSSAKRKEPEPKGAAKKKQRLGPAGKFKRGK). Residues Lys354, Lys375, Lys377, and Lys380 each carry the N6-acetyllysine modification. Positions 363–380 (AAKKKQRLGPAGKFKRGK) are enriched in basic residues.

This sequence belongs to the XPG/RAD2 endonuclease family. FEN1 subfamily. As to quaternary structure, interacts with PCNA. Three molecules of FEN1 bind to one PCNA trimer with each molecule binding to one PCNA monomer. PCNA stimulates the nuclease activity without altering cleavage specificity. The C-terminal domain binds EP300; can bind simultaneously to both PCNA and EP300. Interacts with DDX11; this interaction is direct and increases flap endonuclease activity of FEN1. Interacts with WDR4; regulating its endonuclease activity. Interacts with POLB. Requires Mg(2+) as cofactor. Post-translationally, acetylated by EP300. Acetylation inhibits both endonuclease and exonuclease activity. Acetylation also reduces DNA-binding activity but does not affect interaction with PCNA or EP300. Phosphorylation upon DNA damage induces relocalization to the nuclear plasma. Phosphorylation at Ser-187 by CDK2 occurs during late S-phase and results in dissociation from PCNA. In terms of processing, methylation at Arg-192 by PRMT5 impedes Ser-187 phosphorylation and increases interaction with PCNA.

The protein localises to the nucleus. It is found in the nucleolus. The protein resides in the nucleoplasm. Its subcellular location is the mitochondrion. Its function is as follows. Structure-specific nuclease with 5'-flap endonuclease and 5'-3' exonuclease activities involved in DNA replication and repair. During DNA replication, cleaves the 5'-overhanging flap structure that is generated by displacement synthesis when DNA polymerase encounters the 5'-end of a downstream Okazaki fragment. It enters the flap from the 5'-end and then tracks to cleave the flap base, leaving a nick for ligation. Also involved in the long patch base excision repair (LP-BER) pathway, by cleaving within the apurinic/apyrimidinic (AP) site-terminated flap. Acts as a genome stabilization factor that prevents flaps from equilibrating into structures that lead to duplications and deletions. Also possesses 5'-3' exonuclease activity on nicked or gapped double-stranded DNA, and exhibits RNase H activity. Also involved in replication and repair of rDNA and in repairing mitochondrial DNA. The protein is Flap endonuclease 1 of Ovis aries (Sheep).